The chain runs to 313 residues: Intelectin-1b (313 aa).

Positions Met-1–Ala-19 are cleaved as a signal peptide. In terms of domain architecture, Fibrinogen C-terminal spans Ser-32–Cys-251. Cys-41 and Cys-70 are disulfide-bonded. Residues His-86, Glu-87, Asn-89, Gly-92, Gly-97, Asp-98, and Asp-133 each coordinate Ca(2+). Intrachain disulfides connect Cys-94/Cys-280, Cys-199/Cys-259, and Cys-251/Cys-265. A glycan (N-linked (GlcNAc...) asparagine) is linked at Asn-163. Ca(2+) contacts are provided by Asn-260, Glu-262, Glu-274, and Asp-282. Residues Glu-262–His-263 and Glu-274 each bind a carbohydrate. Residue Ser-298 is the site of GPI-anchor amidated serine attachment. Residues Asn-299–Arg-313 constitute a propeptide that is removed on maturation.

In terms of tissue distribution, expressed in the globlet and Paneth cells of the small intestine of infected mice. Expressed in the ileum of uninfected mice.

The protein localises to the cell membrane. The protein resides in the secreted. In terms of biological role, may play a protective role in the innate immune response to parasite infection. The sequence is that of Intelectin-1b (Itln1b) from Mus musculus (Mouse).